A 54-amino-acid polypeptide reads, in one-letter code: Light-harvesting protein B-800/850 alpha chain (54 aa).

Residues 1–14 (MTNGKIWLVVKPTV) are Cytoplasmic-facing. The chain crosses the membrane as a helical span at residues 15–35 (GVPLFLSAAVIASVVIHAAVL). A bacteriochlorophyll is bound at residue H31. The Periplasmic portion of the chain corresponds to 36–54 (TTTTWLPAYYQGSAAVAAE).

Belongs to the antenna complex alpha subunit family. In terms of assembly, the core complex is formed by different alpha and beta chains, binding bacteriochlorophyll molecules, and arranged most probably in tetrameric structures disposed around the reaction center. The non-pigmented gamma chains may constitute additional components.

The protein localises to the cell inner membrane. Its function is as follows. Antenna complexes are light-harvesting systems, which transfer the excitation energy to the reaction centers. In Cereibacter sphaeroides (Rhodobacter sphaeroides), this protein is Light-harvesting protein B-800/850 alpha chain (pucA).